The primary structure comprises 154 residues: Large ribosomal subunit protein uL13 (154 aa).

This sequence belongs to the universal ribosomal protein uL13 family. As to quaternary structure, part of the 50S ribosomal subunit.

Its function is as follows. This protein is one of the early assembly proteins of the 50S ribosomal subunit, although it is not seen to bind rRNA by itself. It is important during the early stages of 50S assembly. The sequence is that of Large ribosomal subunit protein uL13 from Rhizobium leguminosarum bv. trifolii (strain WSM2304).